A 250-amino-acid chain; its full sequence is uncharacterized protein (250 aa).

Helical transmembrane passes span 36 to 56 (VALG…VPAV), 73 to 93 (PLYM…GFAM), 101 to 121 (AGAL…SVML), 128 to 148 (VAAT…FGYT), 156 to 176 (FGSF…VSIF), 180 to 200 (PALL…LIAY), and 225 to 245 (FGAL…LSFF).

Belongs to the BI1 family.

Its subcellular location is the cell membrane. This is an uncharacterized protein from Caulobacter vibrioides (strain ATCC 19089 / CIP 103742 / CB 15) (Caulobacter crescentus).